The chain runs to 89 residues: MACPLDQAIGLLVAIFHKYSGKEGDKHTLSKKELKELIQKELTIGAKLQDAEIARLMDDLDRNKDQEVNFQEYVAFLGALALIYNEALK.

2 consecutive EF-hand domains span residues 12-47 (LVAIFHKYSGKEGDKHTLSKKELKELIQKELTIGAK) and 48-83 (LQDAEIARLMDDLDRNKDQEVNFQEYVAFLGALALI). The Ca(2+) site is built by threonine 28 and glutamate 33. Lysine 40 carries the post-translational modification N6-acetyllysine. N6-acetyllysine; alternate is present on lysine 47. An N6-succinyllysine; alternate modification is found at lysine 47. Ca(2+)-binding residues include aspartate 61, asparagine 63, aspartate 65, glutamate 67, and glutamate 72.

It belongs to the S-100 family. As to quaternary structure, homodimer; head to tail assembly of 2 subunits. Interacts with CACYBP in a calcium-dependent manner. Interacts with ANXA2 and ANXA11 (via N-terminus). Interacts with SUGT1. Interacts with TP53; has higher affinity for TP53 that is phosphorylated on its N-terminal domain, and lower affinity for TP53 that is phosphorylated on its C-terminal domain. Interacts with tropomyosin. Interacts with FKBP4. Interacts with PPP5C (via TPR repeats); the interaction is calcium-dependent and modulates PPP5C activity. Interacts with TPPP; this interaction inhibits TPPP dimerization.

The protein resides in the nucleus envelope. It is found in the cytoplasm. Its subcellular location is the cell membrane. Its function is as follows. May function as calcium sensor and modulator, contributing to cellular calcium signaling. May function by interacting with other proteins, such as TPR-containing proteins, and indirectly play a role in many physiological processes such as the reorganization of the actin cytoskeleton and in cell motility. Binds 2 calcium ions. Calcium binding is cooperative. The chain is Protein S100-A6 (S100a6) from Rattus norvegicus (Rat).